The sequence spans 340 residues: MYNTDVVIIGAGPVGLFAVFQAGMLGMKCHVIDAQEVIGGQCITLYPEKPIYDIPAYPKIAAEELIKQLALQAAPFNPIYHLNQQAIELNKQDDFFEIKTSKNTLIKSKVIIIAAGAGSFGPNKPPLANIEDFESKSVFYFINDKSKFAGKNIVIAGGGDSAVDWAISLSDIANKIYLVHRRDKFTAAPESVRQLRHIAETDKIELITGYQLNALDGNNSELQSVIVKDLQNNTRKLDANILLPFFGLKQDLGSLANWGLNVKLHHIEVDSSYYQTNIEGIYAIGDIAHYVGKLKLILTGFAEAASSLHHAYSRVFDGKALHFEYSTTKNTGKRSKSVTK.

FAD is bound by residues Asp-33, Gln-41, Tyr-46, Ala-86, Phe-120, Asp-286, and Thr-327.

It belongs to the ferredoxin--NADP reductase type 2 family. Homodimer. FAD serves as cofactor.

The catalysed reaction is 2 reduced [2Fe-2S]-[ferredoxin] + NADP(+) + H(+) = 2 oxidized [2Fe-2S]-[ferredoxin] + NADPH. This is Ferredoxin--NADP reductase from Rickettsia conorii (strain ATCC VR-613 / Malish 7).